Here is a 506-residue protein sequence, read N- to C-terminus: Maturase K (506 aa).

Belongs to the intron maturase 2 family. MatK subfamily.

It localises to the plastid. The protein resides in the chloroplast. Usually encoded in the trnK tRNA gene intron. Probably assists in splicing its own and other chloroplast group II introns. The sequence is that of Maturase K from Trifolium beckwithii (Beckwith's clover).